The chain runs to 80 residues: Growth factor (80 aa).

The first 19 residues, 1–19 (MATRNLVASLLCIMYAVHA), serve as a signal peptide directing secretion. The EGF-like domain occupies 29–73 (HVKVCNHDYENYCLNNGTCFTIALDNVSITPFCVCRINYEGSRCQ). 3 disulfide bridges follow: cysteine 33-cysteine 47, cysteine 41-cysteine 61, and cysteine 63-cysteine 72. N-linked (GlcNAc...) asparagine; by host glycosylation is found at asparagine 44 and asparagine 54.

It is found in the secreted. The sequence is that of Growth factor from Oryctolagus cuniculus (Rabbit).